The following is a 316-amino-acid chain: L-lactate dehydrogenase (316 aa).

Residues V15, D36, R41, Y66, and 80–81 (GA) contribute to the NAD(+) site. Substrate is bound by residues Q83, R90, and 122–125 (NPVD). NAD(+) is bound by residues 120-122 (ATN) and T145. Substrate is bound at residue 150-153 (DTAR). Positions 155 and 170 each coordinate beta-D-fructose 1,6-bisphosphate. Catalysis depends on H177, which acts as the Proton acceptor. A Phosphotyrosine modification is found at Y222. T231 is a substrate binding site. The disordered stretch occupies residues 287–316 (DPGLSDEEREALRDSARALRDSRADLTVGT). Over residues 296–310 (EALRDSARALRDSRA) the composition is skewed to basic and acidic residues.

It belongs to the LDH/MDH superfamily. LDH family. In terms of assembly, homotetramer.

It localises to the cytoplasm. It carries out the reaction (S)-lactate + NAD(+) = pyruvate + NADH + H(+). Its pathway is fermentation; pyruvate fermentation to lactate; (S)-lactate from pyruvate: step 1/1. With respect to regulation, allosterically activated by fructose 1,6-bisphosphate (FBP). Functionally, catalyzes the conversion of lactate to pyruvate. This Salinibacter ruber (strain DSM 13855 / M31) protein is L-lactate dehydrogenase.